The chain runs to 116 residues: NADH-ubiquinone oxidoreductase chain 3 (116 aa).

Transmembrane regions (helical) follow at residues 3–23, 56–76, and 87–107; these read LIMT…TVSF, FFLV…LLPL, and GTFF…IYEW.

The protein belongs to the complex I subunit 3 family.

It localises to the mitochondrion membrane. It catalyses the reaction a ubiquinone + NADH + 5 H(+)(in) = a ubiquinol + NAD(+) + 4 H(+)(out). Its function is as follows. Core subunit of the mitochondrial membrane respiratory chain NADH dehydrogenase (Complex I) that is believed to belong to the minimal assembly required for catalysis. Complex I functions in the transfer of electrons from NADH to the respiratory chain. The immediate electron acceptor for the enzyme is believed to be ubiquinone. This chain is NADH-ubiquinone oxidoreductase chain 3 (MT-ND3), found in Cyprinus carpio (Common carp).